The following is a 559-amino-acid chain: Potassium-transporting ATPase potassium-binding subunit (559 aa).

12 consecutive transmembrane segments (helical) span residues 7–27 (LLIASFLLILLVLAKPLGSGL), 63–83 (LLALLTLNLLGLSILFCLLFW), 132–152 (GLTVQNFLSAATGIAVVFALI), 170–190 (LVRITLWILFPVALIIALFFI), 253–273 (MVQMLAIFLIPAALCFAFGEA), 283–303 (LLWAMSFIFVVCVAVVMWAEV), 327–347 (FGVLASSLFAVVTTAASCGAV), 356–376 (ALGGMVPMWLMQIGEVVFGGV), 379–399 (GLYGMLLFVLLAVFIAGLMIG), 416–436 (MTALAILVTPMLVLLGSALAM), 484–504 (LLAFCMFVGRFGVIIPVMAIA), and 524–544 (GALFIGLLIGTVLLVGALTFI).

The protein belongs to the KdpA family. The system is composed of three essential subunits: KdpA, KdpB and KdpC.

The protein localises to the cell inner membrane. Functionally, part of the high-affinity ATP-driven potassium transport (or Kdp) system, which catalyzes the hydrolysis of ATP coupled with the electrogenic transport of potassium into the cytoplasm. This subunit binds the periplasmic potassium ions and delivers the ions to the membrane domain of KdpB through an intramembrane tunnel. This is Potassium-transporting ATPase potassium-binding subunit from Salmonella arizonae (strain ATCC BAA-731 / CDC346-86 / RSK2980).